The sequence spans 415 residues: Tyrosine--tRNA ligase (415 aa).

Tyrosine 34 lines the L-tyrosine pocket. The 'HIGH' region motif lies at 39-48; that stretch reads PTADSLHLGH. Positions 164 and 168 each coordinate L-tyrosine. The 'KMSKS' region motif lies at 226-230; it reads KFGKS. Lysine 229 contacts ATP. Residues 348–415 form the S4 RNA-binding domain; it reads KNVVDFLVDG…KKKYFLGKVK (68 aa).

Belongs to the class-I aminoacyl-tRNA synthetase family. TyrS type 1 subfamily. Homodimer.

It localises to the cytoplasm. It catalyses the reaction tRNA(Tyr) + L-tyrosine + ATP = L-tyrosyl-tRNA(Tyr) + AMP + diphosphate + H(+). In terms of biological role, catalyzes the attachment of tyrosine to tRNA(Tyr) in a two-step reaction: tyrosine is first activated by ATP to form Tyr-AMP and then transferred to the acceptor end of tRNA(Tyr). The chain is Tyrosine--tRNA ligase from Leuconostoc mesenteroides subsp. mesenteroides (strain ATCC 8293 / DSM 20343 / BCRC 11652 / CCM 1803 / JCM 6124 / NCDO 523 / NBRC 100496 / NCIMB 8023 / NCTC 12954 / NRRL B-1118 / 37Y).